The sequence spans 70 residues: Movement protein TGBp3 (70 aa).

The Lumenal segment spans residues 1 to 4; sequence MFPR. A helical membrane pass occupies residues 5–25; sequence SGLGLAVAAAVVAYLVLLLAQ. Residues 26-70 lie on the Cytoplasmic side of the membrane; the sequence is QLYMSNSSQCTIVITGESVSVVGCVYSEAFIELVKGLKPYYHPLG.

The protein belongs to the Tymovirales TGBp3 protein family.

It localises to the host endoplasmic reticulum membrane. Plays a role in viral cell-to-cell propagation, by facilitating genome transport to neighboring plant cells through plasmosdesmata. May induce the formation of granular vesicles derived from the Endoplasmic reticulum, which align on actin filaments. This is Movement protein TGBp3 from Crataegus (hawthorn).